Here is a 329-residue protein sequence, read N- to C-terminus: Mitochondrial substrate carrier family protein W (329 aa).

Residues 1–39 (MTTNNSNDNNKRYGIIKQQLQQQQQQHHQQHEQHSRLVE) lie on the Mitochondrial intermembrane side of the membrane. 3 Solcar repeats span residues 34-119 (HSRL…CKEL), 133-221 (ESPL…FKSI), and 231-321 (LGIV…IKKF). The chain crosses the membrane as a helical span at residues 40-60 (MTAGCGAGFMASLFTTPLDVI). The Mitochondrial matrix segment spans residues 61-90 (KTTLQVDNSSNKTIMSTVKSILDRKGGVKN). A helical membrane pass occupies residues 91 to 111 (LYLGLKPTLVGQIPSWAVYFS). Topologically, residues 112–135 (TYTFCKELFTKENDKHSLLEKESP) are mitochondrial intermembrane. The helical transmembrane segment at 136 to 156 (LIFMTSAIIAGAATSICTSPI) threads the bilayer. Residues 157 to 193 (WLIKTRFITQEMVGRQKKYRGIVHSMVSIYHEEGFRG) lie on the Mitochondrial matrix side of the membrane. Residues 194–214 (LYKGLGPSLLGVLHVGVQFPL) traverse the membrane as a helical segment. Residues 215–230 (YEKFKSILKEKNKNKE) lie on the Mitochondrial intermembrane side of the membrane. Residues 231–251 (LGIVEIMIASSVSKIIASVVA) form a helical membrane-spanning segment. Over 252–296 (YPHEVLRARSQDSSPDSPNRTYRGNIIQMFKQIVREEGWRGLYRG) the chain is Mitochondrial matrix. A helical transmembrane segment spans residues 297-315 (MGVNLLRVTPSCVITFTSY). At 316–329 (EYIKKFLSQNQNHF) the chain is on the mitochondrial intermembrane side.

Belongs to the mitochondrial carrier (TC 2.A.29) family.

The protein resides in the mitochondrion inner membrane. Functionally, mitochondrial solute carriers shuttle metabolites, nucleotides, and cofactors through the mitochondrial inner membrane. This Dictyostelium discoideum (Social amoeba) protein is Mitochondrial substrate carrier family protein W (mcfW).